We begin with the raw amino-acid sequence, 80 residues long: Large ribosomal subunit protein uL24 (80 aa).

This sequence belongs to the universal ribosomal protein uL24 family. Part of the 50S ribosomal subunit.

Functionally, one of two assembly initiator proteins, it binds directly to the 5'-end of the 23S rRNA, where it nucleates assembly of the 50S subunit. Its function is as follows. One of the proteins that surrounds the polypeptide exit tunnel on the outside of the subunit. The chain is Large ribosomal subunit protein uL24 from Chlorobaculum tepidum (strain ATCC 49652 / DSM 12025 / NBRC 103806 / TLS) (Chlorobium tepidum).